Reading from the N-terminus, the 421-residue chain is MSKTHLTEQKFSDFALHAKVIEALENKGFHYCTPIQALALPLTLAGRDVAGQAQTGTGKTMAFLTSAFHYLLSNPAMADRKVNQPRALIMAPTRELAVQIHADAEPLAQTTGLKLGLAYGGDGYDKQLKVLESGVDILIGTTGRLIDYAKQNHINLGAIQVVVLDEADRMYDLGFIKDIRWLFRRMPPTPQRLNMLFSATLSYRVRELAFEQMNNAEYVEVEPEQKTGHRIKEELFYPSNEEKMRLLQTLIEEEWPDRAIIFANTKHRCEDIWGHLAADGHRVGLLTGDVAQKKRLRILEDFTRGDLDILVATDVAARGLHIPAVTHVFNYDLPDDCEDYVHRIGRTGRAGASGHSISLACEEYALNLTAIETYIGHSVPQSKYNPDALLSELPPPKRLTRARSGNGPRRTGAPRNRRRPG.

Positions 9-37 (QKFSDFALHAKVIEALENKGFHYCTPIQA) match the Q motif motif. Residues 40 to 219 (LPLTLAGRDV…FEQMNNAEYV (180 aa)) form the Helicase ATP-binding domain. Position 53 to 60 (53 to 60 (AQTGTGKT)) interacts with ATP. Residues 165-168 (DEAD) carry the DEAD box motif. Residues 245-390 (RLLQTLIEEE…QSKYNPDALL (146 aa)) enclose the Helicase C-terminal domain. The segment at 386 to 421 (PDALLSELPPPKRLTRARSGNGPRRTGAPRNRRRPG) is disordered. Low complexity predominate over residues 405–414 (GNGPRRTGAP).

Belongs to the DEAD box helicase family. RhlB subfamily. In terms of assembly, component of the RNA degradosome, which is a multiprotein complex involved in RNA processing and mRNA degradation.

The protein resides in the cytoplasm. It catalyses the reaction ATP + H2O = ADP + phosphate + H(+). Its function is as follows. DEAD-box RNA helicase involved in RNA degradation. Has RNA-dependent ATPase activity and unwinds double-stranded RNA. This chain is ATP-dependent RNA helicase RhlB, found in Enterobacter sp. (strain 638).